Reading from the N-terminus, the 365-residue chain is tRNA(Met) cytidine acetate ligase (365 aa).

Residues 7 to 20, glycine 96, asparagine 152, and arginine 175 contribute to the ATP site; that span reads IAEF…HKYL.

The protein belongs to the TmcAL family.

The protein resides in the cytoplasm. The catalysed reaction is cytidine(34) in elongator tRNA(Met) + acetate + ATP = N(4)-acetylcytidine(34) in elongator tRNA(Met) + AMP + diphosphate. Its function is as follows. Catalyzes the formation of N(4)-acetylcytidine (ac(4)C) at the wobble position of elongator tRNA(Met), using acetate and ATP as substrates. First activates an acetate ion to form acetyladenylate (Ac-AMP) and then transfers the acetyl group to tRNA to form ac(4)C34. The sequence is that of tRNA(Met) cytidine acetate ligase from Streptococcus pneumoniae (strain 70585).